Reading from the N-terminus, the 178-residue chain is Ribosome maturation factor RimM (178 aa).

Residues 101 to 178 form the PRC barrel domain; it reads DGEYYWYQLQ…EMKVEWDADF (78 aa).

Belongs to the RimM family. As to quaternary structure, binds ribosomal protein uS19.

Its subcellular location is the cytoplasm. Its function is as follows. An accessory protein needed during the final step in the assembly of 30S ribosomal subunit, possibly for assembly of the head region. Essential for efficient processing of 16S rRNA. May be needed both before and after RbfA during the maturation of 16S rRNA. It has affinity for free ribosomal 30S subunits but not for 70S ribosomes. This is Ribosome maturation factor RimM from Pseudomonas fluorescens (strain ATCC BAA-477 / NRRL B-23932 / Pf-5).